We begin with the raw amino-acid sequence, 345 residues long: tRNA pseudouridine synthase B (345 aa).

D39 serves as the catalytic Nucleophile.

This sequence belongs to the pseudouridine synthase TruB family. Type 1 subfamily.

The catalysed reaction is uridine(55) in tRNA = pseudouridine(55) in tRNA. Its function is as follows. Responsible for synthesis of pseudouridine from uracil-55 in the psi GC loop of transfer RNAs. The sequence is that of tRNA pseudouridine synthase B from Rickettsia rickettsii (strain Iowa).